The primary structure comprises 431 residues: Histidinol dehydrogenase (431 aa).

Positions 127, 189, and 212 each coordinate NAD(+). Positions 237, 259, and 262 each coordinate substrate. The Zn(2+) site is built by Gln-259 and His-262. Catalysis depends on proton acceptor residues Glu-326 and His-327. Residues His-327, Asp-360, Glu-414, and His-419 each coordinate substrate. A Zn(2+)-binding site is contributed by Asp-360. Position 419 (His-419) interacts with Zn(2+).

The protein belongs to the histidinol dehydrogenase family. Zn(2+) serves as cofactor.

The catalysed reaction is L-histidinol + 2 NAD(+) + H2O = L-histidine + 2 NADH + 3 H(+). Its pathway is amino-acid biosynthesis; L-histidine biosynthesis; L-histidine from 5-phospho-alpha-D-ribose 1-diphosphate: step 9/9. In terms of biological role, catalyzes the sequential NAD-dependent oxidations of L-histidinol to L-histidinaldehyde and then to L-histidine. This Xylella fastidiosa (strain Temecula1 / ATCC 700964) protein is Histidinol dehydrogenase.